The following is a 206-amino-acid chain: Large ribosomal subunit protein uL13y (206 aa).

Belongs to the universal ribosomal protein uL13 family.

The sequence is that of Large ribosomal subunit protein uL13y (RPL13AB) from Arabidopsis thaliana (Mouse-ear cress).